The following is a 375-amino-acid chain: Platelet-derived growth factor receptor-like protein (375 aa).

A signal peptide spans 1–21; that stretch reads MKIWLLLGLLLMHEALEDVTG. A disordered region spans residues 20–64; the sequence is TGQHPPKNKRPKEPGENRIKPTNKKVKPKIPKIKDRDSADPTPKT. Over residues 40–50 the composition is skewed to basic residues; it reads PTNKKVKPKIP. The Ig-like C2-type 1 domain occupies 62 to 159; the sequence is PKTQSIMTQM…GYVCRRDEAK (98 aa). Cys96 and Cys143 are oxidised to a cystine. Residues Asn132 and Asn219 are each glycosylated (N-linked (GlcNAc...) asparagine). Residues 272-373 enclose the Ig-like C2-type 2 domain; sequence PSTTILASSN…GQTTVATTVE (102 aa). Cys293 and Cys357 are joined by a disulfide.

Forms a complex composed of PDGFRL, TNK2 and GRB2.

It is found in the secreted. In Bos taurus (Bovine), this protein is Platelet-derived growth factor receptor-like protein (PDGFRL).